The primary structure comprises 240 residues: MSLDMKEHPDAEVQKNRVLTLEDWKDKWVTRHISFHQEQGHQLLKKHLDTFLKGQSGLRVFFPLCGKAVEMKWFADRGHTVVGVEISEIGIREFFAEQNLSYTEEPLAEIAGAKVFKSSSGSISLYCCSIFDLPRANIGKFDRIWDRGALVAINPGDHDRYADIILSLLRKEFQYLMAVLSYDPTKHAGPPFYVPSAELKRLFGTKCSMQCLEEVDALEERHKAWGLDYLFEKLYLLTEK.

24-35 provides a ligand contact to S-adenosyl-L-methionine; that stretch reads WKDKWVTRHISF. Position 35 (Phe-35) interacts with substrate. Lys-53 carries the post-translational modification N6-acetyllysine. S-adenosyl-L-methionine-binding positions include Leu-64, Glu-85, 129-130, and Arg-147; that span reads SI.

The protein belongs to the class I-like SAM-binding methyltransferase superfamily. TPMT family. In terms of assembly, monomer.

It localises to the cytoplasm. The enzyme catalyses S-adenosyl-L-methionine + a thiopurine = S-adenosyl-L-homocysteine + a thiopurine S-methylether.. It catalyses the reaction mercaptopurine + S-adenosyl-L-methionine = 6-methylthiopurine + S-adenosyl-L-homocysteine + H(+). Functionally, catalyzes the S-methylation of thiopurine drugs such as 6-mercaptopurine (also called mercaptopurine, 6-MP or its brand name Purinethol) using S-adenosyl-L-methionine as the methyl donor. TPMT activity modulates the cytotoxic effects of thiopurine prodrugs. A natural substrate for this enzyme has yet to be identified. The polypeptide is Thiopurine S-methyltransferase (Tpmt) (Mus spretus (Western Mediterranean mouse)).